We begin with the raw amino-acid sequence, 1657 residues long: MDSKKRSSTEAEGSKERGLVHIWQAGSFPITPERLPGWGGKTVLQAALGVKHGVLLTEDGEVYSFGTLPWRSGPVEICPSSPILENALVGQYVVTVATGSFHSGAVTDNGVAYMWGENSAGQCAVANQQYVPEPNPVSIADSEASPLLAVRILQLACGEEHTLALSISREIWAWGTGCQLGLITTAFPVTKPQKVEHLAGRVVLQVACGAFHSLALVQCLPSQDLKPVPERCNQCSQLLITMTDKEDHVIISDSHCCPLGVTLTESQAENHASTALSPSTETLDRQEEVFENTLVANDQSVATELNAVSAQITSSDAMSSQQNVMGTTEISSARNIPSYPDTQAVNEYLRKLSDHSVREDSEHGEKPMPSQPLLEEAIPNLHSPPTTSTSALNSLVVSCASAVGVRVAATYEAGALSLKKVMNFYSTTPCETGAQAGSSAIGPEGLKDSREEQVKQESMQGKKSSSLVDIREEETEGGSRRLSLPGLLSQVSPRLLRKAARVKTRTVVLTPTYSGEADALLPSLRTEVWTWGKGKEGQLGHGDVLPRLQPLCVKCLDGKEVIHLEAGGYHSLALTAKSQVYSWGSNTFGQLGHSDFPTTVPRLAKISSENGVWSVAAGRDYSLFLVDTEDFQPGLYYSGRQDPTEGDNLPENHSGSKTPVLLSCSKLGYISRVTAGKDSYLALVDKNIMGYIASLHELATTERRFYSKLSDIKSQILRPLLSLENLGTTTTVQLLQEVASRFSKLCYLIGQHGASLSSFLHGVKEARSLVILKHSSLFLDSYTEYCTSITNFLVMGGFQLLAKPAIDFLNKNQELLQDLSEVNDENTQLMEILNTLFFLPIRRLHNYAKVLLKLATCFEVASPEYQKLQDSSSCYECLALHLGRKRKEAEYTLGFWKTFPGKMTDSLRKPERRLLCESSNRALSLQHAGRFSVNWFILFNDALVHAQFSTHHVFPLATLWAEPLSEEAGGVNGLKITTPEEQFTLISSTPQEKTKWLRAISQAVDQALRGMSDLPPYGSGSSVQRQEPPISRSAKYTFYKDPRLKDATYDGRWLSGKPHGRGVLKWPDGKMYSGMFRNGLEDGYGEYRIPNKAMNKEDHYVGHWKEGKMCGQGVYSYASGEVFEGCFQDNMRHGHGLLRSGKLTSSSPSMFIGQWVMDKKAGYGVFDDITRGEKYMGMWQDDVCQGNGVVVTQFGLYYEGNFHLNKMMGNGVLLSEDDTIYEGEFSDDWTLSGKGTLTMPNGDYIEGYFSGEWGSGIKITGTYFKPSLYESDKDRPKVFRKLRNLAVPADEKWKAVFDECWRQLGCEGPGQGEVWKAWDNIAVALTTSRRQHRDSPEILSRSQTQTLESLEFIPQHVGAFSVEKYDDIRKYLIKACDTPLHPLGRLVETLVAVYRMTYVGVGANRRLLQEAVKEIKSYLKRIFQLVRFLFPELPEEGSTIPLSAPLPTERKSFCTGKSDSRSESPEPGYVVTSSGLLLPVLLPRLYPPLFMLYALDNDREEDIYWECVLRLNKQPDIALLGFLGVQRKFWPATLSILGESKKVLPTTKDACFASAVECLQQISTTFTPSDKLKVIQQTFEEISQSVLASLHEDFLWSMDDLFPVFLYVVLRARIRNLGSEVHLIEDLMDPYLQHGEQGIMFTTLKACYYQIQREKLN.

RCC1 repeat units follow at residues 60–109 (GEVY…VTDN), 110–168 (GVAY…LSIS), and 169–219 (REIW…LVQC). The segment at 432-481 (TGAQAGSSAIGPEGLKDSREEQVKQESMQGKKSSSLVDIREEETEGGSRR) is disordered. Basic and acidic residues predominate over residues 445 to 455 (GLKDSREEQVK). The span at 456-467 (QESMQGKKSSSL) shows a compositional bias: polar residues. Ser465, Ser466, Ser483, and Ser492 each carry phosphoserine. Thr510 carries the phosphothreonine modification. RCC1 repeat units lie at residues 526-577 (TEVW…LTAK) and 578-628 (SQVY…LVDT). Lys533 bears the N6-acetyllysine mark. The DH domain occupies 690–885 (GYIASLHELA…ECLALHLGRK (196 aa)). A PH domain is found at 901-1007 (GKMTDSLRKP…RAISQAVDQA (107 aa)). MORN repeat units lie at residues 1049–1071 (YDGRWLSGKPHGRGVLKWPDGKM), 1072–1094 (YSGMFRNGLEDGYGEYRIPNKAM), 1100–1122 (YVGHWKEGKMCGQGVYSYASGEV), 1123–1145 (FEGCFQDNMRHGHGLLRSGKLTS), 1151–1173 (FIGQWVMDKKAGYGVFDDITRGE), 1175–1197 (YMGMWQDDVCQGNGVVVTQFGLY), 1198–1220 (YEGNFHLNKMMGNGVLLSEDDTI), and 1221–1244 (YEGEFSDDWTLSGKGTLTMPNGDY). The residue at position 1335 (Ser1335) is a Phosphoserine. One can recognise a VPS9 domain in the interval 1513–1657 (KQPDIALLGF…YYQIQREKLN (145 aa)).

Forms a heteromeric complex with ALS2CL. Interacts with ALS2CL.

May act as a GTPase regulator. Controls survival and growth of spinal motoneurons. This chain is Alsin (ALS2), found in Pan troglodytes (Chimpanzee).